The sequence spans 438 residues: PHAF1 protein CG7083 (438 aa).

The protein belongs to the PHAF1 family.

The protein localises to the cytoplasm. Its subcellular location is the preautophagosomal structure. In terms of biological role, may play a regulatory role in autophagic activity. The sequence is that of PHAF1 protein CG7083 from Drosophila melanogaster (Fruit fly).